The chain runs to 148 residues: Endoribonuclease YbeY (148 aa).

The Zn(2+) site is built by His-112, His-116, and His-122.

Belongs to the endoribonuclease YbeY family. Zn(2+) serves as cofactor.

The protein localises to the cytoplasm. In terms of biological role, single strand-specific metallo-endoribonuclease involved in late-stage 70S ribosome quality control and in maturation of the 3' terminus of the 16S rRNA. This chain is Endoribonuclease YbeY, found in Albidiferax ferrireducens (strain ATCC BAA-621 / DSM 15236 / T118) (Rhodoferax ferrireducens).